The primary structure comprises 70 residues: Large ribosomal subunit protein bL33m (70 aa).

It belongs to the bacterial ribosomal protein bL33 family. Component of the mitochondrial large ribosomal subunit (mt-LSU). Mature yeast 74S mitochondrial ribosomes consist of a small (37S) and a large (54S) subunit. The 37S small subunit contains a 15S ribosomal RNA (15S mt-rRNA) and 34 different proteins. The 54S large subunit contains a 21S rRNA (21S mt-rRNA) and 46 different proteins. bL33m stabilizes the tRNA acceptor stem in the E-site.

It localises to the mitochondrion. Component of the mitochondrial ribosome (mitoribosome), a dedicated translation machinery responsible for the synthesis of mitochondrial genome-encoded proteins, including at least some of the essential transmembrane subunits of the mitochondrial respiratory chain. The mitoribosomes are attached to the mitochondrial inner membrane and translation products are cotranslationally integrated into the membrane. In Saccharomyces cerevisiae (strain ATCC 204508 / S288c) (Baker's yeast), this protein is Large ribosomal subunit protein bL33m (MRPL39).